Consider the following 157-residue polypeptide: Class 10 plant pathogenesis-related protein 2F (157 aa).

Aspartate 8 contacts trans-zeatin. Ca(2+)-binding residues include proline 32, valine 35, and isoleucine 38. 4 residues coordinate trans-zeatin: glutamate 60, histidine 69, tyrosine 81, and tyrosine 83.

The protein belongs to the BetVI family.

The protein localises to the cytoplasm. The protein resides in the cytosol. Class II ribonuclease (RNase). Binds to cytokinins. Interacts with melatonin. The polypeptide is Class 10 plant pathogenesis-related protein 2F (Lupinus luteus (European yellow lupine)).